A 483-amino-acid polypeptide reads, in one-letter code: Lipoamide acyltransferase component of branched-chain alpha-keto acid dehydrogenase complex, mitochondrial (483 aa).

A mitochondrion-targeting transit peptide spans 1–75 (MIARRIWRSH…AMATDSNSGL (75 aa)). The region spanning 76 to 150 (IDVPLAQTGE…KVGETLVRLA (75 aa)) is the Lipoyl-binding domain. At K116 the chain carries N6-lipoyllysine. One can recognise a Peripheral subunit-binding (PSBD) domain in the interval 183–220 (LSTPAVRNLAKDLGIDINVITGTGKDGRVLKEDVLRFS). Active-site residues include H453 and D457.

The protein belongs to the 2-oxoacid dehydrogenase family. Forms a 24-polypeptide structural core with octahedral symmetry. Requires (R)-lipoate as cofactor. Expressed in the non-photosynthetic organs such as siliques, flowers and roots.

It is found in the mitochondrion matrix. The catalysed reaction is N(6)-[(R)-dihydrolipoyl]-L-lysyl-[protein] + 2-methylpropanoyl-CoA = N(6)-[(R)-S(8)-2-methylpropanoyldihydrolipoyl]-L-lysyl-[protein] + CoA. The branched-chain alpha-keto dehydrogenase complex catalyzes the overall conversion of alpha-keto acids to acyl-CoA and CO(2). It contains multiple copies of three enzymatic components: branched-chain alpha-keto acid decarboxylase (E1), lipoamide acyltransferase (E2) and lipoamide dehydrogenase (E3). Within this complex, the catalytic function of this enzyme is to accept, and to transfer to coenzyme A, acyl groups that are generated by the branched-chain alpha-keto acid decarboxylase component. Required during sugar starvation and acts under the control of a sugar-sensing mechanism involving Ser/Thr kinases and phosphatases. The protein is Lipoamide acyltransferase component of branched-chain alpha-keto acid dehydrogenase complex, mitochondrial (BCE2) of Arabidopsis thaliana (Mouse-ear cress).